A 112-amino-acid chain; its full sequence is Gonad-inhibiting hormone (112 aa).

A signal peptide spans 1 to 31 (MVTRVGSGFSVQRVWLLLVIVVVLCGSVTQQ). Cystine bridges form between C41–C78, C58–C74, and C61–C87. A109 is subject to Alanine amide.

Produced in the eyestalk X-organ sinus gland complex of male and female lobsters.

The protein resides in the secreted. Inhibits vitellogenesis in female animals. Plays a prominent role in the regulation of reproduction/molting processes. This is Gonad-inhibiting hormone from Homarus americanus (American lobster).